The chain runs to 365 residues: 3-isopropylmalate dehydrogenase (365 aa).

80–93 (GPKWADNTGDQRPE) contacts NAD(+). Substrate contacts are provided by Arg-100, Arg-110, Arg-138, and Asp-223. 3 residues coordinate Mg(2+): Asp-223, Asp-247, and Asp-251. 280–292 (GSAPDIAGQDVAN) contacts NAD(+). The segment at 337–365 (NEEDASTSAFGREVATRAADSVPQNAPTP) is disordered.

Belongs to the isocitrate and isopropylmalate dehydrogenases family. LeuB type 1 subfamily. In terms of assembly, homodimer. The cofactor is Mg(2+). It depends on Mn(2+) as a cofactor.

It localises to the cytoplasm. It carries out the reaction (2R,3S)-3-isopropylmalate + NAD(+) = 4-methyl-2-oxopentanoate + CO2 + NADH. It functions in the pathway amino-acid biosynthesis; L-leucine biosynthesis; L-leucine from 3-methyl-2-oxobutanoate: step 3/4. Catalyzes the oxidation of 3-carboxy-2-hydroxy-4-methylpentanoate (3-isopropylmalate) to 3-carboxy-4-methyl-2-oxopentanoate. The product decarboxylates to 4-methyl-2 oxopentanoate. The sequence is that of 3-isopropylmalate dehydrogenase from Salinibacter ruber (strain DSM 13855 / M31).